The chain runs to 132 residues: UPF0201 protein MTH_433 (132 aa).

Belongs to the UPF0201 family.

The polypeptide is UPF0201 protein MTH_433 (Methanothermobacter thermautotrophicus (strain ATCC 29096 / DSM 1053 / JCM 10044 / NBRC 100330 / Delta H) (Methanobacterium thermoautotrophicum)).